Reading from the N-terminus, the 516-residue chain is 2,3-bisphosphoglycerate-independent phosphoglycerate mutase (516 aa).

Asp-13 and Ser-63 together coordinate Mn(2+). Catalysis depends on Ser-63, which acts as the Phosphoserine intermediate. Substrate is bound by residues His-124, 154 to 155, Arg-186, Arg-192, 262 to 265, and Lys-337; these read RD and RPDR. Mn(2+) contacts are provided by Asp-404, His-408, Asp-445, His-446, and His-464.

This sequence belongs to the BPG-independent phosphoglycerate mutase family. As to quaternary structure, monomer. The cofactor is Mn(2+).

It catalyses the reaction (2R)-2-phosphoglycerate = (2R)-3-phosphoglycerate. Its pathway is carbohydrate degradation; glycolysis; pyruvate from D-glyceraldehyde 3-phosphate: step 3/5. Functionally, catalyzes the interconversion of 2-phosphoglycerate and 3-phosphoglycerate. The protein is 2,3-bisphosphoglycerate-independent phosphoglycerate mutase of Cellvibrio japonicus (strain Ueda107) (Pseudomonas fluorescens subsp. cellulosa).